The primary structure comprises 249 residues: Coproheme decarboxylase (249 aa).

The active site involves Tyr-145. Residues 145–149 (YPMAR) and His-172 contribute to the Fe-coproporphyrin III site.

It belongs to the ChdC family. Type 1 subfamily. Fe-coproporphyrin III is required as a cofactor.

The enzyme catalyses Fe-coproporphyrin III + 2 H2O2 + 2 H(+) = heme b + 2 CO2 + 4 H2O. It catalyses the reaction Fe-coproporphyrin III + H2O2 + H(+) = harderoheme III + CO2 + 2 H2O. The catalysed reaction is harderoheme III + H2O2 + H(+) = heme b + CO2 + 2 H2O. The protein operates within porphyrin-containing compound metabolism; protoheme biosynthesis. In terms of biological role, involved in coproporphyrin-dependent heme b biosynthesis. Catalyzes the decarboxylation of Fe-coproporphyrin III (coproheme) to heme b (protoheme IX), the last step of the pathway. The reaction occurs in a stepwise manner with a three-propionate intermediate. The polypeptide is Coproheme decarboxylase (Oceanobacillus iheyensis (strain DSM 14371 / CIP 107618 / JCM 11309 / KCTC 3954 / HTE831)).